Reading from the N-terminus, the 244-residue chain is 1-(5-phosphoribosyl)-5-[(5-phosphoribosylamino)methylideneamino] imidazole-4-carboxamide isomerase (244 aa).

D8 acts as the Proton acceptor in catalysis. Catalysis depends on D130, which acts as the Proton donor.

It belongs to the HisA/HisF family.

Its subcellular location is the cytoplasm. The catalysed reaction is 1-(5-phospho-beta-D-ribosyl)-5-[(5-phospho-beta-D-ribosylamino)methylideneamino]imidazole-4-carboxamide = 5-[(5-phospho-1-deoxy-D-ribulos-1-ylimino)methylamino]-1-(5-phospho-beta-D-ribosyl)imidazole-4-carboxamide. It functions in the pathway amino-acid biosynthesis; L-histidine biosynthesis; L-histidine from 5-phospho-alpha-D-ribose 1-diphosphate: step 4/9. This is 1-(5-phosphoribosyl)-5-[(5-phosphoribosylamino)methylideneamino] imidazole-4-carboxamide isomerase from Hahella chejuensis (strain KCTC 2396).